The chain runs to 359 residues: MISNGTGSSFCLDSPPCRITVSVVLTVLILITIAGNVVVCLAVGLNRRLRSLTNCFIVSLAITDLLLGLLVLPFSAFYQLSCRWSFGKVFCNIYTSLDVMLCTASILNLFMISLDRYCAVTDPLRYPVLITPVRVAVSLVLIWVISITLSFLSIHLGWNSRNETSSFNHTIPKCKVQVNLVYGLVDGLVTFYLPLLVMCITYYRIFKIARDQAKRIHHMGSWKAATIGEHKATVTLAAVMGAFIICWFPYFTVFVYRGLKGDDAINEAFEAVVLWLGYANSALNPILYATLNRDFRTAYQQLFRCRPASHNAQETSLRSNSSQLARNQSREPMRQEEKPLKLQVWSGTEVTAPRGATDR.

Residues Met1 to Ser22 lie on the Extracellular side of the membrane. Asn4 carries N-linked (GlcNAc...) asparagine glycosylation. Residues Val23–Gly44 traverse the membrane as a helical segment. The Cytoplasmic portion of the chain corresponds to Leu45–Ile57. Residues Val58–Ser81 traverse the membrane as a helical segment. The Extracellular portion of the chain corresponds to Cys82–Asn92. Cys91 and Cys174 form a disulfide bridge. Residues Ile93–Leu114 traverse the membrane as a helical segment. Residues Asp115–Arg134 are Cytoplasmic-facing. Residues Val135 to Asn159 form a helical membrane-spanning segment. The Extracellular segment spans residues Ser160–Leu180. Residues Val181–Arg204 form a helical membrane-spanning segment. The Cytoplasmic segment spans residues Ile205–Val234. Residues Thr235–Gly258 form a helical membrane-spanning segment. Residues Leu259–Glu267 lie on the Extracellular side of the membrane. The helical transmembrane segment at Ala268 to Ala289 threads the bilayer. Residues Thr290–Arg359 lie on the Cytoplasmic side of the membrane. Residue Cys305 is the site of S-palmitoyl cysteine attachment. The segment covering His310–Asn327 has biased composition (polar residues). A disordered region spans residues His310 to Arg359. Over residues Gln328–Leu340 the composition is skewed to basic and acidic residues.

It belongs to the G-protein coupled receptor 1 family. Gastric fundus and, to a lesser extent, in brain.

The protein localises to the cell membrane. Functionally, the H2 subclass of histamine receptors mediates gastric acid secretion. The activity of this receptor is mediated by G proteins which activate adenylyl cyclase. The protein is Histamine H2 receptor (HRH2) of Canis lupus familiaris (Dog).